Reading from the N-terminus, the 717-residue chain is MADPSSYRPKPGQIPDSPGVYKFRDEHRRVIYVGKAKNLRQRVANYFQDLANLHPRTRTMVTTAASVEWTVVSTEVEALQLEYSWIKEFDPRFNVKYRDDKSYPYLAVTLNEEFPRVQVMRGAKKKGVRYFGPYGHAWAIRETVDLMLRVFPVRTCSAGVFKNAARTGRPCLLGYIGKCSAPCVGRVTPEEHRELAEDFCDFMAGRTGTYIRRLEKDMMQAAEEMEYERAARLRDDAEALKRAMEKSAVVLADATDADLIAVAEDELEAALQIFHVRGGRVRGQRGWVTDKVEAVDTSGLVEHALQQLYGEERGDAVPKEVLVPALPEDPEAVSQWLADRRGSQVSLRIPQRGDKKDLMATVQRNAQQALGLHKTKRASDLTTRSRALEEIAEALGLDTAPLRIECYDISHLQGDDVVASMVVFEDGLARKSEYRRFQIKGFEGQDDVRSMHEVIGRRFKRYLQDKERTGEWEEAPEAAPGSASVHASATGPAATGQATAGPAAMGQAAAGPVSTGPAATGPVPAPELTAASPDDEPEPREDDGRPKRFAYPPQLVVVDGGQPQVAAARRALDELGIDDIAVCGLAKRLEEVWLPDDDDPVVLPRSSEGLYLLQRVRDEAHRFAITYQRAKRAKRIRSSPLDDVTGLGETRKQALIKHFGSVKKLRQATIDEICEVPGIGRRTAESVVAALATTAPAAPAVNTATGEIIEEDDGGSS.

Residues 16 to 95 (DSPGVYKFRD…IKEFDPRFNV (80 aa)) form the GIY-YIG domain. The region spanning 208-243 (GTYIRRLEKDMMQAAEEMEYERAARLRDDAEALKRA) is the UVR domain. The interval 467 to 548 (ERTGEWEEAP…PREDDGRPKR (82 aa)) is disordered. Low complexity predominate over residues 477-522 (EAAPGSASVHASATGPAATGQATAGPAAMGQAAAGPVSTGPAATGP).

It belongs to the UvrC family. In terms of assembly, interacts with UvrB in an incision complex.

The protein localises to the cytoplasm. The UvrABC repair system catalyzes the recognition and processing of DNA lesions. UvrC both incises the 5' and 3' sides of the lesion. The N-terminal half is responsible for the 3' incision and the C-terminal half is responsible for the 5' incision. This is UvrABC system protein C from Streptomyces griseus subsp. griseus (strain JCM 4626 / CBS 651.72 / NBRC 13350 / KCC S-0626 / ISP 5235).